The following is a 136-amino-acid chain: Large ribosomal subunit protein bL20c (136 aa).

Belongs to the bacterial ribosomal protein bL20 family.

Its subcellular location is the plastid. It localises to the chloroplast. Functionally, binds directly to 23S ribosomal RNA and is necessary for the in vitro assembly process of the 50S ribosomal subunit. It is not involved in the protein synthesizing functions of that subunit. The polypeptide is Large ribosomal subunit protein bL20c (Huperzia lucidula (Shining clubmoss)).